Consider the following 220-residue polypeptide: Protein GrpE (220 aa).

Residues 1–22 (MSDEKNKFTDASFENCDLKNPS) are disordered.

The protein belongs to the GrpE family. As to quaternary structure, homodimer.

The protein resides in the cytoplasm. Functionally, participates actively in the response to hyperosmotic and heat shock by preventing the aggregation of stress-denatured proteins, in association with DnaK and GrpE. It is the nucleotide exchange factor for DnaK and may function as a thermosensor. Unfolded proteins bind initially to DnaJ; upon interaction with the DnaJ-bound protein, DnaK hydrolyzes its bound ATP, resulting in the formation of a stable complex. GrpE releases ADP from DnaK; ATP binding to DnaK triggers the release of the substrate protein, thus completing the reaction cycle. Several rounds of ATP-dependent interactions between DnaJ, DnaK and GrpE are required for fully efficient folding. In Bartonella henselae (strain ATCC 49882 / DSM 28221 / CCUG 30454 / Houston 1) (Rochalimaea henselae), this protein is Protein GrpE.